The chain runs to 268 residues: F-actin-capping protein subunit alpha (268 aa).

Position 2 is an N-acetylserine (Ser2). Phosphoserine is present on Ser17.

It belongs to the F-actin-capping protein alpha subunit family. Component of the F-actin capping complex, composed of a heterodimer of an alpha and a beta subunit. Interacts with BSP1 (via C-terminus); leading to recruitment of the F-actin capping complex to actin cortical patches and the acomyosin contractile ring.

Its subcellular location is the cytoplasm. The protein resides in the cytoskeleton. It localises to the actin patch. Functionally, F-actin-capping proteins bind in a Ca(2+)-independent manner to the fast growing ends of actin filaments (barbed end) thereby blocking the exchange of subunits at these ends. Unlike other capping proteins (such as gelsolin and severin), these proteins do not sever actin filaments. The polypeptide is F-actin-capping protein subunit alpha (CAP1) (Saccharomyces cerevisiae (strain ATCC 204508 / S288c) (Baker's yeast)).